The following is a 158-amino-acid chain: Endoribonuclease YbeY (158 aa).

Residues histidine 119, histidine 123, and histidine 129 each coordinate Zn(2+).

The protein belongs to the endoribonuclease YbeY family. Zn(2+) is required as a cofactor.

The protein localises to the cytoplasm. Single strand-specific metallo-endoribonuclease involved in late-stage 70S ribosome quality control and in maturation of the 3' terminus of the 16S rRNA. The polypeptide is Endoribonuclease YbeY (Shewanella sediminis (strain HAW-EB3)).